The sequence spans 571 residues: Quinone-dependent D-lactate dehydrogenase (571 aa).

Positions 44 to 273 constitute an FAD-binding PCMH-type domain; that stretch reads GGGPVFAVVR…FAVRTRTFPR (230 aa). FAD-binding positions include 78 to 82, 86 to 87, glycine 145, serine 152, glycine 162, and valine 263; these read ASNTG and GS.

This sequence belongs to the quinone-dependent D-lactate dehydrogenase family. It depends on FAD as a cofactor.

The protein localises to the cell membrane. It carries out the reaction (R)-lactate + a quinone = a quinol + pyruvate. Functionally, catalyzes the oxidation of D-lactate to pyruvate. Also has weak activity with L-lactate and DL-2-hydroxybutyrate. Electrons derived from D-lactate oxidation enter the electron transport chain. Essential for growth with D-lactate as sole carbon and energy source. This Corynebacterium glutamicum (strain ATCC 13032 / DSM 20300 / JCM 1318 / BCRC 11384 / CCUG 27702 / LMG 3730 / NBRC 12168 / NCIMB 10025 / NRRL B-2784 / 534) protein is Quinone-dependent D-lactate dehydrogenase.